A 349-amino-acid chain; its full sequence is MNRKARRCLGHLFLSLGMVYLRIGGFSSVVALGASIICNKIPGLAPRQRAICQSRPDAIIVIGEGSQMGLDECQFQFRNGRWNCSALGERTVFGKELKVGSREAAFTYAIIAAGVAHAITAACTQGNLSDCGCDKEKQGQYHRDEGWKWGGCSADIRYGIGFAKVFVDAREIKQNARTLMNLHNNEAGRKILEENMKLECKCHGVSGSCTTKTCWTTLPQFRELGYVLKDKYNEAVHVEPVRASRNKRPTFLKIKKPLSYRKPMDTDLVYIEKSPNYCEEDPVTGSVGTQGRACNKTAPQASGCDLMCCGRGYNTHQYARVWQCNCKFHWCCYVKCNTCSERTEMYTCK.

The signal sequence occupies residues 1 to 31; it reads MNRKARRCLGHLFLSLGMVYLRIGGFSSVVA. Disulfide bonds link cysteine 73-cysteine 84, cysteine 123-cysteine 131, cysteine 133-cysteine 152, cysteine 200-cysteine 214, and cysteine 202-cysteine 209. Asparagine 83 and asparagine 127 each carry an N-linked (GlcNAc...) asparagine glycan. The O-palmitoleoyl serine; by PORCN moiety is linked to residue serine 206. A disordered linker region spans residues 238 to 266; sequence VEPVRASRNKRPTFLKIKKPLSYRKPMDT. Cystine bridges form between cysteine 278-cysteine 309, cysteine 294-cysteine 304, cysteine 308-cysteine 348, cysteine 324-cysteine 339, cysteine 326-cysteine 336, and cysteine 331-cysteine 332. N-linked (GlcNAc...) asparagine glycosylation is present at asparagine 295.

The protein belongs to the Wnt family. Forms a soluble 1:1 complex with AFM; this prevents oligomerization and is required for prolonged biological activity. The complex with AFM may represent the physiological form in body fluids. Interacts with PORCN. Interacts (via intrinsically disordered linker region) with RECK; interaction with RECK confers ligand selectivity for Wnt7 in brain endothelial cells and allows these cells to selectively respond to Wnt7. Interacts with FZD5. Palmitoleoylation is required for efficient binding to frizzled receptors. Depalmitoleoylation leads to Wnt signaling pathway inhibition.

The protein resides in the secreted. The protein localises to the extracellular space. It localises to the extracellular matrix. Its function is as follows. Ligand for members of the frizzled family of seven transmembrane receptors that functions in the canonical Wnt/beta-catenin signaling pathway. Plays an important role in embryonic development, including dorsal versus ventral patterning during limb development, skeleton development and urogenital tract development. Required for central nervous system (CNS) angiogenesis and blood-brain barrier regulation. Required for normal, sexually dimorphic development of the Mullerian ducts, and for normal fertility in both sexes. Required for normal neural stem cell proliferation in the hippocampus dentate gyrus. Required for normal progress through the cell cycle in neural progenitor cells, for self-renewal of neural stem cells, and for normal neuronal differentiation and maturation. Promotes formation of synapses via its interaction with FZD5. This Pongo pygmaeus (Bornean orangutan) protein is Protein Wnt-7a (WNT7A).